A 153-amino-acid polypeptide reads, in one-letter code: 6,7-dimethyl-8-ribityllumazine synthase (153 aa).

Residues Phe-22, 56–58 (AFE), and 80–82 (AVI) each bind 5-amino-6-(D-ribitylamino)uracil. 85 to 86 (AT) contributes to the (2S)-2-hydroxy-3-oxobutyl phosphate binding site. The active-site Proton donor is His-88. A 5-amino-6-(D-ribitylamino)uracil-binding site is contributed by Phe-113. Arg-127 provides a ligand contact to (2S)-2-hydroxy-3-oxobutyl phosphate.

It belongs to the DMRL synthase family.

It carries out the reaction (2S)-2-hydroxy-3-oxobutyl phosphate + 5-amino-6-(D-ribitylamino)uracil = 6,7-dimethyl-8-(1-D-ribityl)lumazine + phosphate + 2 H2O + H(+). It functions in the pathway cofactor biosynthesis; riboflavin biosynthesis; riboflavin from 2-hydroxy-3-oxobutyl phosphate and 5-amino-6-(D-ribitylamino)uracil: step 1/2. Catalyzes the formation of 6,7-dimethyl-8-ribityllumazine by condensation of 5-amino-6-(D-ribitylamino)uracil with 3,4-dihydroxy-2-butanone 4-phosphate. This is the penultimate step in the biosynthesis of riboflavin. The chain is 6,7-dimethyl-8-ribityllumazine synthase from Alkaliphilus metalliredigens (strain QYMF).